Consider the following 262-residue polypeptide: Apolipoprotein A-I (262 aa).

A signal peptide spans 1–18; that stretch reads MKFLALALTILLAAATQA. Positions 32-63 are 3 X approximate tandem repeats; sequence VKVAMMEYMAQVKETGQRSIDLLDDTEFKEYK. 2 tandem repeats follow at residues 64 to 85 and 87 to 107. Positions 64 to 262 are 10 X approximate tandem repeats; the sequence is VQLSQSLDNL…YETISQAMKA (199 aa). One copy of the 3; half-length repeat lies at 108 to 118; that stretch reads KDVEDVRTQLE. A run of 5 repeats spans residues 119 to 140, 141 to 162, 163 to 184, 185 to 206, and 207 to 228. A 9; half-length repeat occupies 229-239; the sequence is PLTNDFKGQVG. Copy 10 of the repeat occupies 240 to 262; it reads PAAEQAKEKLMDFYETISQAMKA.

Belongs to the apolipoprotein A1/A4/E family.

The protein resides in the secreted. Participates in the reverse transport of cholesterol from tissues to the liver for excretion by promoting cholesterol efflux from tissues and by acting as a cofactor for the lecithin cholesterol acyltransferase (LCAT). The chain is Apolipoprotein A-I (apoa1) from Salmo trutta (Brown trout).